The sequence spans 216 residues: ATP-dependent dethiobiotin synthetase BioD (216 aa).

12–17 serves as a coordination point for ATP; the sequence is NVGKTF. T16 contacts Mg(2+). K36 is an active-site residue. S40 lines the substrate pocket. Residues D53, 110-113, and 170-171 contribute to the ATP site; these read EGAG and NQ. Positions 53 and 110 each coordinate Mg(2+).

This sequence belongs to the dethiobiotin synthetase family. Homodimer. Requires Mg(2+) as cofactor.

The protein localises to the cytoplasm. The enzyme catalyses (7R,8S)-7,8-diammoniononanoate + CO2 + ATP = (4R,5S)-dethiobiotin + ADP + phosphate + 3 H(+). The protein operates within cofactor biosynthesis; biotin biosynthesis; biotin from 7,8-diaminononanoate: step 1/2. Its function is as follows. Catalyzes a mechanistically unusual reaction, the ATP-dependent insertion of CO2 between the N7 and N8 nitrogen atoms of 7,8-diaminopelargonic acid (DAPA, also called 7,8-diammoniononanoate) to form a ureido ring. The chain is ATP-dependent dethiobiotin synthetase BioD from Vesicomyosocius okutanii subsp. Calyptogena okutanii (strain HA).